Consider the following 341-residue polypeptide: Elongation factor Ts (341 aa).

The interval 80–83 (TDFV) is involved in Mg(2+) ion dislocation from EF-Tu.

The protein belongs to the EF-Ts family.

Its subcellular location is the cytoplasm. Associates with the EF-Tu.GDP complex and induces the exchange of GDP to GTP. It remains bound to the aminoacyl-tRNA.EF-Tu.GTP complex up to the GTP hydrolysis stage on the ribosome. The polypeptide is Elongation factor Ts (Lactobacillus gasseri (strain ATCC 33323 / DSM 20243 / BCRC 14619 / CIP 102991 / JCM 1131 / KCTC 3163 / NCIMB 11718 / NCTC 13722 / AM63)).